A 281-amino-acid chain; its full sequence is 2-dehydro-3-deoxyphosphooctonate aldolase (281 aa).

The protein belongs to the KdsA family.

It localises to the cytoplasm. The enzyme catalyses D-arabinose 5-phosphate + phosphoenolpyruvate + H2O = 3-deoxy-alpha-D-manno-2-octulosonate-8-phosphate + phosphate. It participates in carbohydrate biosynthesis; 3-deoxy-D-manno-octulosonate biosynthesis; 3-deoxy-D-manno-octulosonate from D-ribulose 5-phosphate: step 2/3. Its pathway is bacterial outer membrane biogenesis; lipopolysaccharide biosynthesis. The polypeptide is 2-dehydro-3-deoxyphosphooctonate aldolase (Pseudomonas fluorescens (strain ATCC BAA-477 / NRRL B-23932 / Pf-5)).